The primary structure comprises 272 residues: MKIQTNAVNVLERTSAYLRTGVIKETPAWYNVVASIPPVTKFTREPHKINPSTDKKVSELKDPDLESVNRNGLYKTRFNALERKVANKQIYKPPKLVYLEDKIRTLFYKQHPWELARPKIVSENEINTNPDWKNMLQLGQPLDGENVVQRTLYLLKTKEQSNITDAYDQARLEFYRLRMQQELEEQVAAEEAEMFGSVFGPSTIEHGVTKEQQVIEKWKRDAELQSELLSAKKENASKAAGDASAVSSEKQVEDDVVNFDESTDADQEVLHF.

The disordered stretch occupies residues 233-272 (KENASKAAGDASAVSSEKQVEDDVVNFDESTDADQEVLHF). A compositionally biased stretch (acidic residues) spans 252–272 (VEDDVVNFDESTDADQEVLHF).

The protein belongs to the mitochondrion-specific ribosomal protein mS23 family. In terms of assembly, component of the mitochondrial small ribosomal subunit.

The protein localises to the mitochondrion. The protein is Small ribosomal subunit protein mS23 (RSM25) of Candida glabrata (strain ATCC 2001 / BCRC 20586 / JCM 3761 / NBRC 0622 / NRRL Y-65 / CBS 138) (Yeast).